A 509-amino-acid chain; its full sequence is Cobyric acid synthase (509 aa).

A GATase cobBQ-type domain is found at 262 to 459 (EIKVGIIKLP…IHGIFENDIW (198 aa)). C343 serves as the catalytic Nucleophile. Residue H451 is part of the active site.

This sequence belongs to the CobB/CobQ family. CobQ subfamily.

Its pathway is cofactor biosynthesis; adenosylcobalamin biosynthesis. Functionally, catalyzes amidations at positions B, D, E, and G on adenosylcobyrinic A,C-diamide. NH(2) groups are provided by glutamine, and one molecule of ATP is hydrogenolyzed for each amidation. The chain is Cobyric acid synthase from Prochlorococcus marinus (strain MIT 9312).